A 652-amino-acid chain; its full sequence is Acetyl-coenzyme A synthetase (652 aa).

CoA contacts are provided by residues Arg191–Arg194, Thr311, and Asn335. ATP is bound by residues Gly387–Pro389, Asp411–Thr416, Asp500, and Arg515. Ser523 contributes to the CoA binding site. Arg526 provides a ligand contact to ATP. Positions 537, 539, and 542 each coordinate Mg(2+). Arg584 contributes to the CoA binding site. Lys609 bears the N6-acetyllysine mark.

It belongs to the ATP-dependent AMP-binding enzyme family. It depends on Mg(2+) as a cofactor. In terms of processing, acetylated. Deacetylation by the SIR2-homolog deacetylase activates the enzyme.

It carries out the reaction acetate + ATP + CoA = acetyl-CoA + AMP + diphosphate. Its function is as follows. Catalyzes the conversion of acetate into acetyl-CoA (AcCoA), an essential intermediate at the junction of anabolic and catabolic pathways. Acs undergoes a two-step reaction. In the first half reaction, Acs combines acetate with ATP to form acetyl-adenylate (AcAMP) intermediate. In the second half reaction, it can then transfer the acetyl group from AcAMP to the sulfhydryl group of CoA, forming the product AcCoA. Functionally, enables the cell to use acetate during aerobic growth to generate energy via the TCA cycle, and biosynthetic compounds via the glyoxylate shunt. Acetylates CheY, the response regulator involved in flagellar movement and chemotaxis. The polypeptide is Acetyl-coenzyme A synthetase (Escherichia coli O157:H7).